We begin with the raw amino-acid sequence, 184 residues long: Cysteine proteinase inhibitor 3 (184 aa).

The first 35 residues, 1-35, serve as a signal peptide directing secretion; it reads MLRRRGFCCCSGAPAAAAAALLLLAVAAAAPRAAG. Positions 48–134 constitute a Cystatin domain; it reads GMLAAIRREQ…KAVVEFRHVG (87 aa). A Secondary area of contact motif is present at residues 90-94; it reads QVVTG. Residues 138-165 form a disordered region; that stretch reads SQSATAADDNAGQDTADPTVASRNDLHN.

Belongs to the cystatin family. Phytocystatin subfamily.

The protein resides in the secreted. Its function is as follows. Specific inhibitor of cysteine proteinases. Probably involved in the regulation of endogenous processes and in defense against pests and pathogens. This is Cysteine proteinase inhibitor 3 from Oryza sativa subsp. japonica (Rice).